The chain runs to 277 residues: Carbonyl reductase [NADPH] 3 (277 aa).

Position 2 is an N-acetylserine (Ser2). NADP(+)-binding positions include 10–34 (VTGA…GDVV), 38–42 (RDEAR), 63–64 (DI), and Asn90. The residue at position 30 (Ser30) is a Phosphoserine. Position 140 (Ser140) interacts with substrate. Catalysis depends on Tyr194, which acts as the Proton acceptor. NADP(+) is bound at residue 194-198 (YGVSK).

This sequence belongs to the short-chain dehydrogenases/reductases (SDR) family.

The protein resides in the cytoplasm. It catalyses the reaction a secondary alcohol + NADP(+) = a ketone + NADPH + H(+). It carries out the reaction a quinone + NADPH + H(+) = a quinol + NADP(+). Functionally, catalyzes the NADPH-dependent reduction of carbonyl compounds to their corresponding alcohols. Has low NADPH-dependent oxidoreductase activity. Acts on several orthoquinones, as well as on non-quinone compounds, such as isatin or on the anticancer drug oracin. Best substrates for CBR3 is 1,2- naphthoquinone, hence could play a role in protection against cytotoxicity of exogenous quinones. Exerts activity toward ortho-quinones but not paraquinones. No endogenous substrate for CBR3 except isatin has been identified. The protein is Carbonyl reductase [NADPH] 3 (Cbr3) of Mus musculus (Mouse).